The following is a 393-amino-acid chain: Protein Njmu-R1 (393 aa).

A disordered region spans residues 1–74 (MLPSLQESLD…AETPSGDDFS (74 aa)). Residues Ser-8 and Ser-18 each carry the phosphoserine modification. Over residues 9-24 (LDGDEKELESSEEGGS) the composition is skewed to acidic residues.

Interacts with TBC1D23; this interaction may be indirect.

In terms of biological role, may have a role in spermatogenesis. The sequence is that of Protein Njmu-R1 from Mus musculus (Mouse).